The sequence spans 153 residues: Gamma-glutamylaminecyclotransferase (153 aa).

Position 7–10 (Tyr7–Leu10) interacts with substrate. Glu82 acts as the Proton acceptor in catalysis. The interval Gln130–Arg153 is disordered. Residues Pro132–Arg153 are compositionally biased toward basic and acidic residues.

It belongs to the gamma-glutamylcyclotransferase family. As to quaternary structure, monomer.

The enzyme catalyses epsilon-(gamma-L-glutamyl)-L-lysine = 5-oxo-L-proline + L-lysine. Contributes to degradation of proteins cross-linked by transglutaminases by degrading the cross-link between a lysine and a glutamic acid residue. Catalyzes the formation of 5-oxo-L-proline from L-gamma-glutamyl-L-epsilon-lysine. Inactive with L-gamma-glutamyl-alpha-amino acid substrates such as L-gamma-glutamyl-L-alpha-cysteine and L-gamma-glutamyl-L-alpha-alanine. This Homo sapiens (Human) protein is Gamma-glutamylaminecyclotransferase (GGACT).